Here is a 372-residue protein sequence, read N- to C-terminus: MTQSRRMLVLRAVVEDYIRSQEPVGSTSLTRDHDLGVSSATIRNDMAALEDEGYLIQPHTSAGRVPTEKGYRYFVDRLATVVPLSEAQRRGINSFLSGSVSLKDALQRSARLLSEITGQVAVVASPSLAKATLRHVEMVPVAMTTLLAVVITDTGRVAQHGLTIASMPAVDEINRLSNTVNEQCDGLSLSKSAETVRSIAASAGYESVRGVADTLADAFESMALDERANELYMSGTSHLAHSRSLADLAPLFDALEEQVVLMKLMSNLSEETNASGVGVAIGSEMHTPGLLHASVVSSGYGRSGAAGEPAGNDPVGEPETESETESQTNDTEPIAFVGSIGPTHMDYAATMAAVRAVARYLTAFLSEGRTQD.

Residues 300-334 (YGRSGAAGEPAGNDPVGEPETESETESQTNDTEPI) are disordered.

The protein belongs to the HrcA family.

Negative regulator of class I heat shock genes (grpE-dnaK-dnaJ and groELS operons). Prevents heat-shock induction of these operons. The chain is Heat-inducible transcription repressor HrcA from Bifidobacterium longum (strain NCC 2705).